Reading from the N-terminus, the 411-residue chain is uncharacterized protein (411 aa).

The protein belongs to the peptidase M20 family.

This is an uncharacterized protein from Haemophilus influenzae (strain ATCC 51907 / DSM 11121 / KW20 / Rd).